Reading from the N-terminus, the 427-residue chain is 3-phosphoshikimate 1-carboxyvinyltransferase (427 aa).

3-phosphoshikimate is bound by residues K20, S21, and R25. Residue K20 participates in phosphoenolpyruvate binding. The phosphoenolpyruvate site is built by G92 and R120. 3-phosphoshikimate-binding residues include S166, Q168, D312, and K339. Q168 is a phosphoenolpyruvate binding site. D312 acts as the Proton acceptor in catalysis. Phosphoenolpyruvate is bound by residues R343 and R385.

It belongs to the EPSP synthase family. Monomer.

It localises to the cytoplasm. The enzyme catalyses 3-phosphoshikimate + phosphoenolpyruvate = 5-O-(1-carboxyvinyl)-3-phosphoshikimate + phosphate. The protein operates within metabolic intermediate biosynthesis; chorismate biosynthesis; chorismate from D-erythrose 4-phosphate and phosphoenolpyruvate: step 6/7. Functionally, catalyzes the transfer of the enolpyruvyl moiety of phosphoenolpyruvate (PEP) to the 5-hydroxyl of shikimate-3-phosphate (S3P) to produce enolpyruvyl shikimate-3-phosphate and inorganic phosphate. The sequence is that of 3-phosphoshikimate 1-carboxyvinyltransferase from Streptococcus pneumoniae serotype 19F (strain G54).